The following is a 31-amino-acid chain: Ranatuerin-2 (31 aa).

Cysteines 23 and 28 form a disulfide.

It belongs to the frog skin active peptide (FSAP) family. Ranatuerin subfamily. Expressed by the skin glands.

Its subcellular location is the secreted. Its function is as follows. Antibacterial activity against Gram-positive bacterium S.aureus (MIC=60 uM). Shows no detectable hemolytic activity towards human erythrocytes. This chain is Ranatuerin-2, found in Aquarana catesbeiana (American bullfrog).